The primary structure comprises 392 residues: Riboflavin biosynthesis protein PYRD, chloroplastic (392 aa).

A chloroplast-targeting transit peptide spans 1–26; the sequence is MASSLVSRPHLTQRPVRAATLASATR. The region spanning 46–168 is the CMP/dCMP-type deaminase domain; that stretch reads LDDAHYMRRC…KLQGAGISVR (123 aa). H95 contacts Zn(2+). E97 (proton donor) is an active-site residue. 2 residues coordinate Zn(2+): C120 and C129.

It depends on Zn(2+) as a cofactor.

The protein resides in the plastid. The protein localises to the chloroplast. It carries out the reaction 2,5-diamino-6-hydroxy-4-(5-phosphoribosylamino)-pyrimidine + H2O + H(+) = 5-amino-6-(5-phospho-D-ribosylamino)uracil + NH4(+). The protein operates within cofactor biosynthesis; riboflavin biosynthesis; 5-amino-6-(D-ribitylamino)uracil from GTP: step 2/4. Its function is as follows. Monofunctional pyrimidine deaminase involved in the riboflavin biosynthesis pathway. Also has a reductase domain that lacks catalytically essential substrate-binding residues. This is Riboflavin biosynthesis protein PYRD, chloroplastic (PYRD) from Zea mays (Maize).